A 1050-amino-acid polypeptide reads, in one-letter code: Toluene efflux pump membrane transporter TtgB (1050 aa).

Transmembrane regions (helical) follow at residues 10–30 (IFAWVIALVIMLVGALSILKL), 339–359 (GVIHTLIEAVVLVFLVMYLFL), 370–390 (MTVPVVLLGTFGILAAAGFSI), 393–413 (LTMFAMVLAIGLLVDDAIVVV), 440–460 (GALVGIALVLSAVLLPMAFFG), 472–492 (ITIVSAMGLSVLVALIFTPAL), 539–559 (VPFLLAYALIVVGMIWLFARI), 871–891 (MPALFALSVLFVFLCLAALYE), 893–913 (WSIPIAVVLVVPLGIIGALIA), 923–943 (VYFLVGLLTTIGLAAKNAILI), 972–992 (IIMTSLAFILGVVPLTIASGA), and 1004–1024 (VIGGMISATVLAIFWVPLFFV).

This sequence belongs to the resistance-nodulation-cell division (RND) (TC 2.A.6) family.

The protein localises to the cell inner membrane. Functionally, the inner membrane transporter component of a constitutive organic solvent efflux system. Involved in export of toluene, styrene, m-xylene, propylbenzene and ethylbenzene. Also exports AMP and the antibiotics carbenicillin, nalidixic acid, chloramphenicol and tetracycline. The protein is Toluene efflux pump membrane transporter TtgB (ttgB) of Pseudomonas putida (strain DOT-T1E).